Here is a 511-residue protein sequence, read N- to C-terminus: DEP domain-containing protein 7 (511 aa).

Residues 46-136 (LQTQVEVKKR…SSCSLYRFTT (91 aa)) enclose the DEP domain.

It belongs to the DEPDC7 family. As to expression, expressed in liver.

In Homo sapiens (Human), this protein is DEP domain-containing protein 7 (DEPDC7).